Reading from the N-terminus, the 123-residue chain is S-adenosylmethionine decarboxylase proenzyme 2 (123 aa).

The active-site Schiff-base intermediate with substrate; via pyruvic acid is the S65. The residue at position 65 (S65) is a Pyruvic acid (Ser); by autocatalysis. Catalysis depends on H70, which acts as the Proton acceptor; for processing activity. The active-site Proton donor; for catalytic activity is C85.

This sequence belongs to the prokaryotic AdoMetDC family. Type 1 subfamily. Heterotetramer of two alpha and two beta chains arranged as a dimer of alpha/beta heterodimers. It depends on pyruvate as a cofactor. In terms of processing, is synthesized initially as an inactive proenzyme. Formation of the active enzyme involves a self-maturation process in which the active site pyruvoyl group is generated from an internal serine residue via an autocatalytic post-translational modification. Two non-identical subunits are generated from the proenzyme in this reaction, and the pyruvate is formed at the N-terminus of the alpha chain, which is derived from the carboxyl end of the proenzyme. The post-translation cleavage follows an unusual pathway, termed non-hydrolytic serinolysis, in which the side chain hydroxyl group of the serine supplies its oxygen atom to form the C-terminus of the beta chain, while the remainder of the serine residue undergoes an oxidative deamination to produce ammonia and the pyruvoyl group blocking the N-terminus of the alpha chain.

It catalyses the reaction S-adenosyl-L-methionine + H(+) = S-adenosyl 3-(methylsulfanyl)propylamine + CO2. It participates in amine and polyamine biosynthesis; S-adenosylmethioninamine biosynthesis; S-adenosylmethioninamine from S-adenosyl-L-methionine: step 1/1. Its function is as follows. Catalyzes the decarboxylation of S-adenosylmethionine to S-adenosylmethioninamine (dcAdoMet), the propylamine donor required for the synthesis of the polyamines spermine and spermidine from the diamine putrescine. The chain is S-adenosylmethionine decarboxylase proenzyme 2 from Bacillus cereus (strain ATCC 14579 / DSM 31 / CCUG 7414 / JCM 2152 / NBRC 15305 / NCIMB 9373 / NCTC 2599 / NRRL B-3711).